The chain runs to 422 residues: Protein krasavietz (422 aa).

The interval 1 to 26 (MSQKTERPVLSGQRIKTRKRDEREKY) is disordered. The W2 domain maps to 244 to 415 (KLHKAQASQE…QSAEEESESE (172 aa)). Phosphoserine occurs at positions 407, 412, and 414.

The protein belongs to the BZW family. Expressed in mushroom bodies.

May be involved in memory formation. The sequence is that of Protein krasavietz (kra) from Drosophila melanogaster (Fruit fly).